Here is a 509-residue protein sequence, read N- to C-terminus: Cobyric acid synthase (509 aa).

Residues 262 to 459 (EIKVGIIKLP…IHGIFENDIW (198 aa)) form the GATase cobBQ-type domain. The Nucleophile role is filled by Cys343. The active site involves His451.

It belongs to the CobB/CobQ family. CobQ subfamily.

The protein operates within cofactor biosynthesis; adenosylcobalamin biosynthesis. Catalyzes amidations at positions B, D, E, and G on adenosylcobyrinic A,C-diamide. NH(2) groups are provided by glutamine, and one molecule of ATP is hydrogenolyzed for each amidation. The polypeptide is Cobyric acid synthase (Prochlorococcus marinus (strain MIT 9312)).